Here is a 292-residue protein sequence, read N- to C-terminus: Ribosomal protein L11 methyltransferase (292 aa).

S-adenosyl-L-methionine is bound by residues Thr145, Gly166, Asp188, and Asn229.

Belongs to the methyltransferase superfamily. PrmA family.

The protein localises to the cytoplasm. The enzyme catalyses L-lysyl-[protein] + 3 S-adenosyl-L-methionine = N(6),N(6),N(6)-trimethyl-L-lysyl-[protein] + 3 S-adenosyl-L-homocysteine + 3 H(+). Functionally, methylates ribosomal protein L11. The sequence is that of Ribosomal protein L11 methyltransferase from Alteromonas mediterranea (strain DSM 17117 / CIP 110805 / LMG 28347 / Deep ecotype).